A 267-amino-acid polypeptide reads, in one-letter code: tRNA pseudouridine synthase A (267 aa).

Asp53 functions as the Nucleophile in the catalytic mechanism. Substrate is bound at residue Tyr111.

The protein belongs to the tRNA pseudouridine synthase TruA family. In terms of assembly, homodimer.

It carries out the reaction uridine(38/39/40) in tRNA = pseudouridine(38/39/40) in tRNA. Its function is as follows. Formation of pseudouridine at positions 38, 39 and 40 in the anticodon stem and loop of transfer RNAs. In Alcanivorax borkumensis (strain ATCC 700651 / DSM 11573 / NCIMB 13689 / SK2), this protein is tRNA pseudouridine synthase A.